A 1081-amino-acid chain; its full sequence is MNTTPFHSDPPPSRIQRKLVVEVVEARNILPKDGQGSSSAYVVVDFDAQKKRTSTKFRDLNPIWNEMLDFAVSDPKNMDYDELDIEVYNDKRFGNGGGRKNHFLGRVKIYGSQFSRRGEEGLVYFPLEKKSVFSWIRGEIGLKIYYYDEAADEDTAGGGGGQQQQQQQQQFHPPQQEADEQQHQQQFHPPPQQMMNIPPEKPNVVVVEEGRVFESAQSQRYTETHQQPPVVIVEESPPQHVMQGPNDNHPHRNDNHPQRPPSPPPPPSAGEVHYYPPEVRKMQVGRPPGGDRIRVTKRPPNGDYSPRVINSKTGGGETTMEKKTHHPYNLVEPMQYLFVRIVKARGLPPNESAYVKVRTSNHFVRSKPAVNRPGESVDSPEWNQVFALGHNRSDSAVTGATLEISAWDASSESFLGGVCFDLSEVPVRDPPDSPLAPQWYRLEGSGADQNSGRISGDIQLSVWIGTQVDEAFPEAWSSDAPHVAHTRSKVYQSPKLWYLRVTVLEAQDLHIAPNLPPLTAPEIRVKAQLGFQSARTRRGSMNNHSGSFHWHEDMIFVAGEPLEDCLVLMVEDRTTKEATLLGHAMIPVSSIEQRIDERFVPSKWHTLEGEGGGGGGGGGPGGGGGGGPYCGRISLRLCLEGGYHVLEEAAHVCSDFRPTAKQLWKPPIGILELGILGARGLLPMKAKNGGKGSTDAYCVAKYGKKWVRTRTITDSFDPRWHEQYTWQVYDPCTVLTVGVFDNWRMFSDASDDRPDTRIGKIRIRVSTLESNKVYTNSYPLLVLLPSGMKKMGEIEVAVRFACPSLLPDVCAAYGQPLLPRMHYIRPLGVAQQDALRGAATKMVAAWLARAEPPLGPEVVRYMLDADSHAWSMRKSKANWYRIVGVLAWAVGLAKWLDNIRRWRNPVTTVLVHILYLVLVWYPDLVVPTAFLYVVMIGVWYYRFRPKIPAGMDIRLSQAETVDPDELDEEFDTIPSSRRPEVIRARYDRLRILAVRVQTILGDFAAQGERIQALVSWRDPRATKLFIAICLVITIVLYAVPAKMVAVALGFYYLRHPMFRDTMPTASLNFFRRLPSLSDRLI.

Residues 1-124 form the C2 1 domain; it reads MNTTPFHSDP…SRRGEEGLVY (124 aa). Disordered regions lie at residues 154–198 and 238–323; these read DTAG…MNIP and PQHV…MEKK. Residues 163 to 176 show a composition bias toward low complexity; sequence QQQQQQQQFHPPQQ. Residues 248-257 show a composition bias toward basic and acidic residues; sequence NHPHRNDNHP. Pro residues predominate over residues 258–268; it reads QRPPSPPPPPS. C2 domains are found at residues 318–440, 477–605, and 652–778; these read TTME…PQWY, SSDA…SKWH, and VCSD…TNSY. Residues E351, S352, D408, and S413 each coordinate Ca(2+). 3 helical membrane passes run 879 to 899, 916 to 936, and 1024 to 1044; these read WYRIVGVLAWAVGLAKWLDNI, LVLVWYPDLVVPTAFLYVVMI, and LFIAICLVITIVLYAVPAKMV.

Belongs to the MCTP family. In terms of assembly, interacts with SUB/SCM and POQ at the plasma membrane. Binds to SUB/SCM at plasmodesmata (PD) in root epidermal cells to promote tissue morphogenesis. Ca(2+) serves as cofactor. Observed mainly in flowers, and, to a lower extent, in seedlings, roots, shoots, leaves, stems and inflorescences. Expressed in the vascular tissues of roots, cotyledons and rosette leaves. Accumulates in roots meristems.

It is found in the cell membrane. It localises to the cytoplasm. Its subcellular location is the golgi apparatus membrane. The protein resides in the cell junction. The protein localises to the plasmodesma. In terms of biological role, may be involved in Ca 2(+)-dependent signaling and membrane trafficking. Plays a role in fruit dehiscence. Components of the machinery involved in organ development mediated by the receptor-like kinase STRUBBELIG (SUB). Collaboratively with SUB and POQ, regulates cell growth anisotropy during gynoecium development, thus linking together cell-cell communication and cellular growth. Together with SUB/SCM, links RLK-dependent signal transduction and intercellular communication mediated by plasmodesmata (PD) to regulate tissue morphogenesis. May function as a signaling molecule by regulating the trafficking of other regulators. This chain is Protein QUIRKY, found in Arabidopsis thaliana (Mouse-ear cress).